A 232-amino-acid chain; its full sequence is Ribose-5-phosphate isomerase A (232 aa).

Substrate contacts are provided by residues 31-34, 87-90, and 100-103; these read TGST, DGAD, and KGGG. The Proton acceptor role is filled by glutamate 109. Lysine 127 is a binding site for substrate.

Belongs to the ribose 5-phosphate isomerase family. In terms of assembly, homodimer.

The catalysed reaction is aldehydo-D-ribose 5-phosphate = D-ribulose 5-phosphate. Its pathway is carbohydrate degradation; pentose phosphate pathway; D-ribose 5-phosphate from D-ribulose 5-phosphate (non-oxidative stage): step 1/1. Catalyzes the reversible conversion of ribose-5-phosphate to ribulose 5-phosphate. The chain is Ribose-5-phosphate isomerase A from Bifidobacterium longum (strain NCC 2705).